A 57-amino-acid polypeptide reads, in one-letter code: Cecropin-A (57 aa).

The N-terminal stretch at 1–21 (IFFFVFACLLALSAVSAAPEP) is a signal peptide.

The protein belongs to the cecropin family.

The protein resides in the secreted. Its function is as follows. Cecropins have lytic and antibacterial activity against several Gram-positive and Gram-negative bacteria. In Spodoptera litura (Asian cotton leafworm), this protein is Cecropin-A (CECA).